A 96-amino-acid chain; its full sequence is Putative membrane protein insertion efficiency factor (96 aa).

Over residues 71-84 the composition is skewed to low complexity; that stretch reads THGTAAAPPASAAP. The tract at residues 71–96 is disordered; that stretch reads THGTAAAPPASAAPGRPPVTVRLPRP.

The protein belongs to the UPF0161 family.

The protein resides in the cell inner membrane. In terms of biological role, could be involved in insertion of integral membrane proteins into the membrane. The sequence is that of Putative membrane protein insertion efficiency factor from Cupriavidus metallidurans (strain ATCC 43123 / DSM 2839 / NBRC 102507 / CH34) (Ralstonia metallidurans).